A 164-amino-acid polypeptide reads, in one-letter code: S-ribosylhomocysteine lyase (164 aa).

The Fe cation site is built by His-54, His-58, and Cys-128.

Belongs to the LuxS family. As to quaternary structure, homodimer. Fe cation serves as cofactor.

The enzyme catalyses S-(5-deoxy-D-ribos-5-yl)-L-homocysteine = (S)-4,5-dihydroxypentane-2,3-dione + L-homocysteine. In terms of biological role, involved in the synthesis of autoinducer 2 (AI-2) which is secreted by bacteria and is used to communicate both the cell density and the metabolic potential of the environment. The regulation of gene expression in response to changes in cell density is called quorum sensing. Catalyzes the transformation of S-ribosylhomocysteine (RHC) to homocysteine (HC) and 4,5-dihydroxy-2,3-pentadione (DPD). This is S-ribosylhomocysteine lyase from Campylobacter hominis (strain ATCC BAA-381 / DSM 21671 / CCUG 45161 / LMG 19568 / NCTC 13146 / CH001A).